We begin with the raw amino-acid sequence, 579 residues long: Arginine--tRNA ligase (579 aa).

The 'HIGH' region signature appears at 123–133; that stretch reads ANPTGPVHVGR.

This sequence belongs to the class-I aminoacyl-tRNA synthetase family.

It is found in the cytoplasm. It catalyses the reaction tRNA(Arg) + L-arginine + ATP = L-arginyl-tRNA(Arg) + AMP + diphosphate. The sequence is that of Arginine--tRNA ligase from Haloarcula marismortui (strain ATCC 43049 / DSM 3752 / JCM 8966 / VKM B-1809) (Halobacterium marismortui).